The chain runs to 749 residues: Protein lin-54 homolog (749 aa).

Lys-139 participates in a covalent cross-link: Glycyl lysine isopeptide (Lys-Gly) (interchain with G-Cter in SUMO2). N6-acetyllysine occurs at positions 244 and 249. 4 positions are modified to phosphoserine: Ser-264, Ser-282, Ser-310, and Ser-314. A Glycyl lysine isopeptide (Lys-Gly) (interchain with G-Cter in SUMO2) cross-link involves residue Lys-357. In terms of domain architecture, CRC spans 521–634; the sequence is PRKPCNCTKS…KCIGCKNFEE (114 aa). Residues 523–536 form a DNA-binding region; the sequence is KPCNCTKSLCLKLY. The Zn(2+) site is built by Cys-525, Cys-527, Cys-532, Cys-537, Cys-539, Cys-546, Cys-549, Cys-551, and Cys-554. Residues 583–596 form a linker region; it reads IGKGKEGESDRRHS. Residues Cys-599, Cys-601, Cys-606, Cys-611, Cys-613, Cys-620, Cys-624, Cys-626, and Cys-629 each coordinate Zn(2+). Residues 599-612 form a DNA-binding region; sequence CNCKRSGCLKNYCE. At Ser-635 the chain carries Phosphoserine. Residues Lys-639, Lys-659, and Lys-661 each participate in a glycyl lysine isopeptide (Lys-Gly) (interchain with G-Cter in SUMO2) cross-link.

Belongs to the lin-54 family. In terms of assembly, component of the DREAM complex (also named LINC complex) at least composed of E2F4, E2F5, LIN9, LIN37, LIN52, LIN54, MYBL1, MYBL2, RBL1, RBL2, RBBP4, RBL2, TFDP1 and TFDP2. The complex exists in quiescent cells where it represses cell cycle-dependent genes. It dissociates in S phase when LIN9, LIN37, LIN52 and LIN54 form a subcomplex that binds to MYBL2.

It is found in the nucleus. Component of the DREAM complex, a multiprotein complex that can both act as a transcription activator or repressor depending on the context. In G0 phase, the complex binds to more than 800 promoters and is required for repression of E2F target genes. In S phase, the complex selectively binds to the promoters of G2/M genes whose products are required for mitosis and participates in their cell cycle dependent activation. In the complex, acts as a DNA-binding protein that binds the promoter of CDK1 in a sequence-specific manner. Specifically recognizes the consensus motif 5'-TTYRAA-3' in target DNA. The polypeptide is Protein lin-54 homolog (Lin54) (Rattus norvegicus (Rat)).